We begin with the raw amino-acid sequence, 242 residues long: Protein crossbronx (242 aa).

One can recognise a UBC core domain in the interval 20 to 176 (QQEYKILAEY…VQENIKESKA (157 aa)).

The protein belongs to the ubiquitin-conjugating enzyme family. FTS subfamily.

This Drosophila ananassae (Fruit fly) protein is Protein crossbronx (cbx).